Reading from the N-terminus, the 706-residue chain is Kinesin-like protein KIF2A (706 aa).

The tract at residues 1-217 (MATANFGKIQ…LDYRPLTTAD (217 aa)) is globular. Residues 66–139 (LVPDEEIEPS…AQQNGSVSDI (74 aa)) form a disordered region. A Phosphoserine modification is found at Ser-75. A phosphothreonine mark is found at Thr-78 and Thr-97. Ser-100 carries the phosphoserine modification. Lys-102 carries the post-translational modification N6-acetyllysine. Residues 123-139 (FPEQSSSAQQNGSVSDI) are compositionally biased toward polar residues. Ser-135 and Ser-140 each carry phosphoserine. The interval 165–186 (KLQEKREKRRLQQQELREKRAQ) is disordered. The Kinesin motor domain occupies 223–553 (RICVCVRKRP…LRYANRVKEL (331 aa)). ATP is bound at residue 313–320 (GQTGSGKT). Phosphoserine is present on residues Asp-556 and Gln-573. The stretch at 660–699 (ATQLEAILEQKIDILTELRDKVKSFRAALQEEEQASKQIN) forms a coiled coil.

It belongs to the TRAFAC class myosin-kinesin ATPase superfamily. Kinesin family. MCAK/KIF2 subfamily. Interacts with AURKA and PLK1. Interacts with PSRC1. Interacts with MCRS1; the interaction enhances recruitment of KIF2A to the minus ends of spindle microtubules which promotes chromosome alignment.

Its subcellular location is the cytoplasm. The protein resides in the cytoskeleton. The protein localises to the microtubule organizing center. It localises to the centrosome. It is found in the spindle pole. Its subcellular location is the spindle. Plus end-directed microtubule-dependent motor required for normal brain development. May regulate microtubule dynamics during axonal growth. Required for normal progression through mitosis. Required for normal congress of chromosomes at the metaphase plate. Required for normal spindle dynamics during mitosis. Promotes spindle turnover. Implicated in formation of bipolar mitotic spindles. Has microtubule depolymerization activity. The protein is Kinesin-like protein KIF2A (KIF2A) of Homo sapiens (Human).